A 373-amino-acid chain; its full sequence is C-C chemokine receptor type 2 (373 aa).

Residues 1–55 are Extracellular-facing; the sequence is MEDNNMLPQFIHGILSTSHSLFTRSIQELDEGATTPYDYDDGEPCHKTSVKQIGA. Residues 56–83 form a helical membrane-spanning segment; sequence WILPPLYSLVFIFGFVGNMLVIIILIGC. Residues 84–93 are Cytoplasmic-facing; the sequence is KKLKSMTDIY. Residues 94 to 114 form a helical membrane-spanning segment; the sequence is LLNLAISDLLFLLTLPFWAHY. Over 115–127 the chain is Extracellular; that stretch reads AANEWVFGNIMCK. Cys-126 and Cys-203 are joined by a disulfide. The chain crosses the membrane as a helical span at residues 128 to 149; sequence VFTGLYHIGYFGGIFFIILLTI. At 150-166 the chain is on the cytoplasmic side; that stretch reads DRYLAIVHAVFALKART. Phosphotyrosine; by JAK2 is present on Tyr-152. Residues 167-191 traverse the membrane as a helical segment; the sequence is VTFGVITSVVTWVVAVFASLPGIIF. Over 192–219 the chain is Extracellular; the sequence is TKSKQDDHHYTCGPYFTQLWKNFQTIMR. Residues 220–239 form a helical membrane-spanning segment; it reads NILSLILPLLVMVICYSGIL. Over 240–256 the chain is Cytoplasmic; the sequence is HTLFRCRNEKKRHRAVR. A helical transmembrane segment spans residues 257–281; the sequence is LIFAIMIVYFLFWTPYNIVLFLTTF. The Extracellular segment spans residues 282-298; it reads QESLGMSNCVIDKHLDQ. The helical transmembrane segment at 299-322 threads the bilayer; sequence AMQVTETLGMTHCCINPVIYAFVG. Residues 323–373 are Cytoplasmic-facing; it reads EKFRRYLSIFFRKHIAKRLCKQCPVFYRETADRVSSTFTPSTGEQEVSVGL.

It belongs to the G-protein coupled receptor 1 family. In terms of assembly, interacts with ARRB1. Interacts (via extracellular N-terminal region) with beta-defensin DEFB106A/DEFB106B; this interaction may preferentially require specific tyrosine sulfation on CCR2. Interacts with NUP85; the interaction is required for CCR2 clusters formation on the cell membrane and CCR2 signaling. N-glycosylated. In terms of processing, sulfation increases the affinity for both monomeric and dimeric CCL2 with stronger binding to the monomeric form. Binding of sulfated CCR2 to CCL2 promotes conversion of CCL2 from dimer to monomer. In terms of tissue distribution, epressed in mature thymocytes. Detected in monocyte/macrophage cell lines, but not in nonhematopoietic cell lines.

Its subcellular location is the cell membrane. Its function is as follows. Key functional receptor for CCL2 but can also bind CCL7 and CCL12 chemokines. Its binding with CCL2 on monocytes and macrophages mediates chemotaxis and migration induction through the activation of the PI3K cascade, the small G protein Rac and lamellipodium protrusion. Also acts as a receptor for the beta-defensin DEFB106A/DEFB106B. Regulates the expression of T-cell inflammatory cytokines and T-cell differentiation, promoting the differentiation of T-cells into T-helper 17 cells (Th17) during inflammation. Facilitates the export of mature thymocytes by enhancing directional movement of thymocytes to sphingosine-1-phosphate stimulation and up-regulation of S1P1R expression; signals through the JAK-STAT pathway to regulate FOXO1 activity leading to an increased expression of S1P1R. Plays an important role in mediating peripheral nerve injury-induced neuropathic pain. Increases NMDA-mediated synaptic transmission in both dopamine D1 and D2 receptor-containing neurons, which may be caused by MAPK/ERK-dependent phosphorylation of GRIN2B/NMDAR2B. Mediates the recruitment of macrophages and monocytes to the injury site following brain injury. This chain is C-C chemokine receptor type 2 (Ccr2), found in Mus musculus (Mouse).